We begin with the raw amino-acid sequence, 371 residues long: Bifunctional chorismate mutase/prephenate dehydratase (371 aa).

One can recognise a Chorismate mutase domain in the interval 1 to 92 (MTLKNALLAF…DSVLTQKKWI (92 aa)). Substrate contacts are provided by arginine 11, arginine 28, lysine 39, aspartate 48, glutamate 52, serine 84, and glutamine 88. The Prephenate dehydratase domain occupies 104–284 (KISFLGSFGS…NITQFIILAQ (181 aa)). Positions 285–371 (KKTYITNKKT…IKCIKILGCF (87 aa)) are regulatory.

The protein localises to the cytoplasm. The enzyme catalyses chorismate = prephenate. It carries out the reaction prephenate + H(+) = 3-phenylpyruvate + CO2 + H2O. It functions in the pathway amino-acid biosynthesis; L-phenylalanine biosynthesis; phenylpyruvate from prephenate: step 1/1. The protein operates within metabolic intermediate biosynthesis; prephenate biosynthesis; prephenate from chorismate: step 1/1. Functionally, catalyzes the Claisen rearrangement of chorismate to prephenate and the decarboxylation/dehydration of prephenate to phenylpyruvate. In Buchnera aphidicola subsp. Baizongia pistaciae (strain Bp), this protein is Bifunctional chorismate mutase/prephenate dehydratase (pheA).